The sequence spans 263 residues: MSSSKPTIAFFGATGGSTISCLAPALKAGYRCAALARTPSRLRDLLVQRGVSESTIADNLTIVSGTATDLQPVKQTLQMGRPASDMADLIVSGIGGKLIMSNPLSPTLDNPTICQDVVRNILTAIRELRDTGTTKAPFLITLSTTGISEVKRDLPIAMMPMYHWMLKVPHDDKKVMERLIVDDAERDPAARALGGYVIVRPSLLTDGDRDKGGDLKKIRVGVEEAPAVGYTISREDVGRWVFEHLVKKGRESEYAGKAVTITY.

The protein belongs to the avfA family.

The protein operates within secondary metabolite biosynthesis. Its function is as follows. Reductase; part of the gene cluster that mediates the biosynthesis of pyranterreones, a family of antioxidative compounds. The first step of pyranonigrins biosynthesis is performed by the hybrid PKS-NRPS synthetase pytA that condenses 4 malonyl-CoA units ato the acetyl starter unit by the modular PKS of pytA. The acyl chain is then connected to an L-serine through the amide bond by the modular NRPS of pytA. A tetramic acid is formed and released from the PKS-NRPS pytA to give pyranterreone 5 with the help of the thioesterase pytI. Pyranterreone 5 could be methylated by pytC to afford pyranterreone 6. Both pyranterreones 5 and 6 are subsequently oxidized by the FAD-linked oxidoreductase pytB and the cytochrome P450 monooxygenase pytD to form the fused gamma-pyrone core, resulting in pyranterreones 7 and 11, respectively. The hydroxy group at C-8 of pyranterreones 7 and 11 are dehydrated by the aspartyl protease pytH to form a delta-7 double bond to give pyranterreones 3 and 1, 2 accordingly. The exo-methylene of pyranterreone 3 could be reduced into a pendant methyl by reductase pytE to provide pyranterreone 4, also known as cordylactam. Pyranterreone 4 can be reconverted to pyranterreone 3 through pytB-catalyzed dehydrogenation or further oxidized to pyranterreones 9 and 10. This is Reductase pytE from Aspergillus terreus.